The primary structure comprises 633 residues: Glutamyl-tRNA(Gln) amidotransferase subunit E (633 aa).

Belongs to the GatB/GatE family. GatE subfamily. In terms of assembly, heterodimer of GatD and GatE.

The catalysed reaction is L-glutamyl-tRNA(Gln) + L-glutamine + ATP + H2O = L-glutaminyl-tRNA(Gln) + L-glutamate + ADP + phosphate + H(+). Its function is as follows. Allows the formation of correctly charged Gln-tRNA(Gln) through the transamidation of misacylated Glu-tRNA(Gln) in organisms which lack glutaminyl-tRNA synthetase. The reaction takes place in the presence of glutamine and ATP through an activated gamma-phospho-Glu-tRNA(Gln). The GatDE system is specific for glutamate and does not act on aspartate. The polypeptide is Glutamyl-tRNA(Gln) amidotransferase subunit E (Saccharolobus islandicus (strain L.S.2.15 / Lassen #1) (Sulfolobus islandicus)).